A 191-amino-acid chain; its full sequence is Fe/S biogenesis protein NfuA (191 aa).

Cysteine 149 and cysteine 152 together coordinate [4Fe-4S] cluster.

This sequence belongs to the NfuA family. As to quaternary structure, homodimer. Requires [4Fe-4S] cluster as cofactor.

Functionally, involved in iron-sulfur cluster biogenesis. Binds a 4Fe-4S cluster, can transfer this cluster to apoproteins, and thereby intervenes in the maturation of Fe/S proteins. Could also act as a scaffold/chaperone for damaged Fe/S proteins. This Photorhabdus laumondii subsp. laumondii (strain DSM 15139 / CIP 105565 / TT01) (Photorhabdus luminescens subsp. laumondii) protein is Fe/S biogenesis protein NfuA.